The primary structure comprises 234 residues: MSLLYEGKAKRIFSTDEDGVLRVEYKDEVTAGNGAKKDHIDGKGRLNNQITSIIFEHLKKHGIKSHFIEQTSETEQLVRSVEIIPLEVVVRNIAAGSITKRLGFEKGHEFETPLVEFFYKNDDLNDPLITDDHVKLLNIANDEEIAKLKKMALEINKALVEMLDSINLRLVDFKIEFGRTEDGDILLADEISPDTCRIWEKDSDTNFDKDVYREDRGSIIDTYQTFLNKLEALK.

Belongs to the SAICAR synthetase family.

The enzyme catalyses 5-amino-1-(5-phospho-D-ribosyl)imidazole-4-carboxylate + L-aspartate + ATP = (2S)-2-[5-amino-1-(5-phospho-beta-D-ribosyl)imidazole-4-carboxamido]succinate + ADP + phosphate + 2 H(+). Its pathway is purine metabolism; IMP biosynthesis via de novo pathway; 5-amino-1-(5-phospho-D-ribosyl)imidazole-4-carboxamide from 5-amino-1-(5-phospho-D-ribosyl)imidazole-4-carboxylate: step 1/2. The chain is Phosphoribosylaminoimidazole-succinocarboxamide synthase from Staphylococcus carnosus (strain TM300).